We begin with the raw amino-acid sequence, 545 residues long: CTP synthase (545 aa).

An amidoligase domain region spans residues 1-267 (MTKFIFVTGG…AEQTLKLLQM (267 aa)). Ser13 is a CTP binding site. Ser13 is a UTP binding site. ATP contacts are provided by residues 14–19 (SIGKGI) and Asp71. Asp71 and Glu141 together coordinate Mg(2+). CTP is bound by residues 148–150 (DIE), 188–193 (KTKPTQ), and Lys224. Residues 188–193 (KTKPTQ) and Lys224 contribute to the UTP site. The Glutamine amidotransferase type-1 domain maps to 292 to 534 (EIAIVGKYVS…VQAAIAQSHP (243 aa)). Gly354 serves as a coordination point for L-glutamine. The active-site Nucleophile; for glutamine hydrolysis is the Cys381. L-glutamine is bound by residues 382 to 385 (LGMQ), Glu405, and Arg462. Active-site residues include His507 and Glu509.

This sequence belongs to the CTP synthase family. Homotetramer.

The enzyme catalyses UTP + L-glutamine + ATP + H2O = CTP + L-glutamate + ADP + phosphate + 2 H(+). It carries out the reaction L-glutamine + H2O = L-glutamate + NH4(+). The catalysed reaction is UTP + NH4(+) + ATP = CTP + ADP + phosphate + 2 H(+). It participates in pyrimidine metabolism; CTP biosynthesis via de novo pathway; CTP from UDP: step 2/2. With respect to regulation, allosterically activated by GTP, when glutamine is the substrate; GTP has no effect on the reaction when ammonia is the substrate. The allosteric effector GTP functions by stabilizing the protein conformation that binds the tetrahedral intermediate(s) formed during glutamine hydrolysis. Inhibited by the product CTP, via allosteric rather than competitive inhibition. Catalyzes the ATP-dependent amination of UTP to CTP with either L-glutamine or ammonia as the source of nitrogen. Regulates intracellular CTP levels through interactions with the four ribonucleotide triphosphates. This chain is CTP synthase, found in Trichormus variabilis (strain ATCC 29413 / PCC 7937) (Anabaena variabilis).